An 825-amino-acid polypeptide reads, in one-letter code: Osmosensitive cation channel TMEM63C (825 aa).

Topologically, residues 1–50 (MAFESWPAGGVRPVEELDVRSFLMEENSTAERCYRSHSRSSVLQGLPFGG) are extracellular. Residues 51–75 (VPTVLAINVVLWLILLLIFSCLRKA) traverse the membrane as a helical segment. At 76 to 141 (AWDYGRLALL…KDEEIRSKCG (66 aa)) the chain is on the cytoplasmic side. The segment at 98–117 (EQSEKEKTPSDSSPSDSETK) is disordered. Residues 142-174 (IDAVTYLSFQRHIILLMMVVCLLSLTIILPVNL) traverse the membrane as a helical segment. At 175–198 (SGNLLGDNPENFGRTTVVNVPAQN) the chain is on the extracellular side. Residues 199 to 223 (IFLWLHSIFALLYFVITVLCMAHHS) form a helical membrane-spanning segment. Residues 224 to 418 (SRLEYREDEK…IIWENLSVCG (195 aa)) lie on the Cytoplasmic side of the membrane. The helical transmembrane segment at 419–448 (PRWWLRCILLNILLFLLLFFLTTPAIIVNT) threads the bilayer. Topologically, residues 449–463 (MDKFNVTRPVESLRN) are extracellular. The chain crosses the membrane as a helical span at residues 464 to 493 (PVITQFFPTLLLWAFSILLPFIVYYSSFFE). The Cytoplasmic segment spans residues 494 to 497 (YHWT). The chain crosses the membrane as a helical span at residues 498 to 534 (RSGENQVTMHKCFLLLVFMVIILPSLGLSSLNLFFRW). Topologically, residues 535–557 (LFDVRFLDETDVKFQCVFLPDNG) are extracellular. The chain crosses the membrane as a helical span at residues 558–590 (AFFVNYVITSSLIGTAMELLRIPALLVYSLRLC). The Cytoplasmic portion of the chain corresponds to 591 to 610 (FAKSKAECIHVKISQAYEFQ). Residues 611 to 629 (FGLEYAWTMCIFSVSMTYS) form a helical membrane-spanning segment. At 630–632 (ITC) the chain is on the extracellular side. A helical transmembrane segment spans residues 633 to 657 (PVIVPFGLLYLVLKHMVDRYNIYYA). Residues 658 to 664 (YTPTKLN) are Cytoplasmic-facing. A helical membrane pass occupies residues 665-693 (QRIHAAAISQVVVAPILCMFWLLFFSVLR). Topologically, residues 694–698 (LGPVQ) are extracellular. Residues 699-719 (PITLFTFITLLCSIAFSCFGF) traverse the membrane as a helical segment. Topologically, residues 720-825 (CMKKLRADRS…LLMDSPVAFQ (106 aa)) are cytoplasmic. Residues 777-825 (SPAHQSYGTMVNSQSSVRDAEEDEEKDLEETLETELKDDLLMDSPVAFQ) are disordered. Positions 779–793 (AHQSYGTMVNSQSSV) are enriched in polar residues. The span at 796–809 (AEEDEEKDLEETLE) shows a compositional bias: acidic residues.

Belongs to the CSC1 (TC 1.A.17) family. As to quaternary structure, monomer.

Its subcellular location is the endoplasmic reticulum membrane. It localises to the cell membrane. The catalysed reaction is Ca(2+)(in) = Ca(2+)(out). Acts as an osmosensitive cation channel preferentially activated upon hypotonic stress. In contrast to tmem63b, does not show phospholipid scramblase activity. Required for the functional integrity of the kidney glomerular filtration barrier. The sequence is that of Osmosensitive cation channel TMEM63C (tmem63c) from Danio rerio (Zebrafish).